The sequence spans 156 residues: Small ribosomal subunit protein uS7 (156 aa).

The protein belongs to the universal ribosomal protein uS7 family. As to quaternary structure, part of the 30S ribosomal subunit. Contacts proteins S9 and S11.

Its function is as follows. One of the primary rRNA binding proteins, it binds directly to 16S rRNA where it nucleates assembly of the head domain of the 30S subunit. Is located at the subunit interface close to the decoding center, probably blocks exit of the E-site tRNA. The protein is Small ribosomal subunit protein uS7 of Blochmanniella pennsylvanica (strain BPEN).